Reading from the N-terminus, the 1358-residue chain is DNA-directed RNA polymerase subunit beta (1358 aa).

It belongs to the RNA polymerase beta chain family. As to quaternary structure, the RNAP catalytic core consists of 2 alpha, 1 beta, 1 beta' and 1 omega subunit. When a sigma factor is associated with the core the holoenzyme is formed, which can initiate transcription.

It catalyses the reaction RNA(n) + a ribonucleoside 5'-triphosphate = RNA(n+1) + diphosphate. Functionally, DNA-dependent RNA polymerase catalyzes the transcription of DNA into RNA using the four ribonucleoside triphosphates as substrates. The polypeptide is DNA-directed RNA polymerase subunit beta (Francisella tularensis subsp. holarctica (strain FTNF002-00 / FTA)).